The primary structure comprises 345 residues: Mitochondrial metalloendopeptidase OMA1 (345 aa).

Residues 1 to 67 (MLRNIIRFKG…ILLDKSSRKY (67 aa)) are Mitochondrial matrix-facing. Residues 68–88 (LALLFGGCSLFYYTHLDKAPV) form a helical membrane-spanning segment. Over 89–345 (SDRSRFIWVS…GNYYKSFFSM (257 aa)) the chain is Mitochondrial intermembrane. Residue His-203 participates in Zn(2+) binding. Glu-204 is a catalytic residue. Zn(2+) is bound by residues His-207 and Glu-257. A disulfide bridge links Cys-272 with Cys-332. The tract at residues 314–345 (ENMSKWLPKANEIYEQSDCSSMGNYYKSFFSM) is required for protease activation.

It belongs to the peptidase M48 family. Homooligomer. The cofactor is Zn(2+). Post-translationally, forms a redox-dependent disulfide bond, which plays a structural role and regulates its conformational stability and activity.

It is found in the mitochondrion inner membrane. Its activity is regulated as follows. Protease activity is induced in response to various mitochondrial stress, such as changes in membrane potential, oxidative stress or chronic hyperpolarization, and depends on its C-terminal region. Its function is as follows. Protease that is part of the quality control system in the inner membrane of mitochondria. Activated in response to various mitochondrial stress, leading to the proteolytic cleavage of target proteins, such as OXA1 and COX1. Cleaves and thereby promotes the turnover of mistranslated or misfolded membrane proteins. Cleaves the misfolded multi-pass membrane protein OXA1. Involved in quality control of cytochrome oxidase assembly: mediates the cleavage of COX1 in cells lacking COA2. Required for the stability of the respiratory supercomplexes. Required for TOR signaling. The polypeptide is Mitochondrial metalloendopeptidase OMA1 (Saccharomyces cerevisiae (strain ATCC 204508 / S288c) (Baker's yeast)).